Here is a 360-residue protein sequence, read N- to C-terminus: Peptide chain release factor 1 (360 aa).

An N5-methylglutamine modification is found at Gln-233. The disordered stretch occupies residues 286–305 (NEIAQERKSQVGTGDRSERI).

This sequence belongs to the prokaryotic/mitochondrial release factor family. In terms of processing, methylated by PrmC. Methylation increases the termination efficiency of RF1.

The protein localises to the cytoplasm. In terms of biological role, peptide chain release factor 1 directs the termination of translation in response to the peptide chain termination codons UAG and UAA. The chain is Peptide chain release factor 1 from Acetivibrio thermocellus (strain ATCC 27405 / DSM 1237 / JCM 9322 / NBRC 103400 / NCIMB 10682 / NRRL B-4536 / VPI 7372) (Clostridium thermocellum).